The chain runs to 544 residues: Membrane protein insertase YidC (544 aa).

A disordered region spans residues 29–58; the sequence is TPKADPSATTQTLNPTSSESEDYVPTSSDS. Over residues 35 to 46 the composition is skewed to polar residues; that stretch reads SATTQTLNPTSS. The next 3 membrane-spanning stretches (helical) occupy residues 341–361, 421–441, and 499–519; these read FVLLKWLHSILGNWGVAIIAI, GGCFPILLQMPIFLALFYVFL, and PVIFSVFFLWFPSGLVLYWLV.

The protein belongs to the OXA1/ALB3/YidC family. Type 1 subfamily. As to quaternary structure, interacts with the Sec translocase complex via SecD. Specifically interacts with transmembrane segments of nascent integral membrane proteins during membrane integration.

The protein resides in the cell inner membrane. Required for the insertion and/or proper folding and/or complex formation of integral membrane proteins into the membrane. Involved in integration of membrane proteins that insert both dependently and independently of the Sec translocase complex, as well as at least some lipoproteins. Aids folding of multispanning membrane proteins. This is Membrane protein insertase YidC from Pseudoalteromonas translucida (strain TAC 125).